The following is a 58-amino-acid chain: UPF0391 membrane protein Shewmr4_2671 (58 aa).

Helical transmembrane passes span 6-26 (LMFL…IAGA) and 28-48 (AGIA…SLLV).

The protein belongs to the UPF0391 family.

It localises to the cell membrane. The sequence is that of UPF0391 membrane protein Shewmr4_2671 from Shewanella sp. (strain MR-4).